A 351-amino-acid chain; its full sequence is uncharacterized protein (351 aa).

The signal sequence occupies residues 1–27; that stretch reads MKNKKRVLIASSLSCAILLLSAATTQA. The segment at 27–71 is disordered; the sequence is ANSAHKDSQDQNKKEHVDKSQQKDKRNVTNKDKNSTAPDDIGKNG. The span at 30–60 shows a compositional bias: basic and acidic residues; that stretch reads AHKDSQDQNKKEHVDKSQQKDKRNVTNKDKN.

Belongs to the aerolysin family.

This is an uncharacterized protein from Staphylococcus aureus (strain USA300).